We begin with the raw amino-acid sequence, 62 residues long: uncharacterized protein (62 aa).

Belongs to the asfivirus C62L family.

This is an uncharacterized protein from African swine fever virus (isolate Tick/South Africa/Pretoriuskop Pr4/1996) (ASFV).